We begin with the raw amino-acid sequence, 173 residues long: Crossover junction endodeoxyribonuclease RuvC (173 aa).

Residues Asp-8, Glu-67, and Asp-139 contribute to the active site. Residues Asp-8, Glu-67, and Asp-139 each coordinate Mg(2+).

The protein belongs to the RuvC family. In terms of assembly, homodimer which binds Holliday junction (HJ) DNA. The HJ becomes 2-fold symmetrical on binding to RuvC with unstacked arms; it has a different conformation from HJ DNA in complex with RuvA. In the full resolvosome a probable DNA-RuvA(4)-RuvB(12)-RuvC(2) complex forms which resolves the HJ. It depends on Mg(2+) as a cofactor.

It is found in the cytoplasm. The catalysed reaction is Endonucleolytic cleavage at a junction such as a reciprocal single-stranded crossover between two homologous DNA duplexes (Holliday junction).. In terms of biological role, the RuvA-RuvB-RuvC complex processes Holliday junction (HJ) DNA during genetic recombination and DNA repair. Endonuclease that resolves HJ intermediates. Cleaves cruciform DNA by making single-stranded nicks across the HJ at symmetrical positions within the homologous arms, yielding a 5'-phosphate and a 3'-hydroxyl group; requires a central core of homology in the junction. The consensus cleavage sequence is 5'-(A/T)TT(C/G)-3'. Cleavage occurs on the 3'-side of the TT dinucleotide at the point of strand exchange. HJ branch migration catalyzed by RuvA-RuvB allows RuvC to scan DNA until it finds its consensus sequence, where it cleaves and resolves the cruciform DNA. This Vibrio vulnificus (strain CMCP6) protein is Crossover junction endodeoxyribonuclease RuvC.